The primary structure comprises 109 residues: Iron-sulfur cluster assembly protein CyaY (109 aa).

This sequence belongs to the frataxin family.

In terms of biological role, involved in iron-sulfur (Fe-S) cluster assembly. May act as a regulator of Fe-S biogenesis. The protein is Iron-sulfur cluster assembly protein CyaY of Albidiferax ferrireducens (strain ATCC BAA-621 / DSM 15236 / T118) (Rhodoferax ferrireducens).